The primary structure comprises 607 residues: Autophagy-related protein 16-1 (607 aa).

The interaction with ATG5 stretch occupies residues 13–43; that stretch reads WKRHISEQLRRRDRLQRQAFEEIILQYNKLL. The stretch at 79 to 230 forms a coiled coil; it reads DSQLQEMAQL…QKELAEAAKE (152 aa). Residue serine 139 is modified to Phosphoserine. Residues 207–230 are WIPI2-binding; that stretch reads AENEKDSRRRQARLQKELAEAAKE. An RB1CC1-binding region spans residues 230-242; that stretch reads EPLPVEQDDDIEV. Phosphoserine is present on residues serine 269 and serine 287. The Caspase cleavage signature appears at 296–299; the sequence is DNVD. WD repeat units follow at residues 320–359, 364–403, 406–445, 447–484, 486–525, 532–573, and 575–607; these read AHDGEVNAVQFSPGSRLLATGGMDRRVKLWEVFGEKCEFK, GSNAGITSIEFDSAGSYLLAASNDFASRIWTVDDSRLRHT, GHSGKVLSAKFLLDNARIVSGSHDRTLKHWDLRSKVCIKT, FAGSSCNDIVCTEQCVMSGHFDKKIRFWDIRSESIVRE, ELLGKITALDLNPERTELLSCSRDDLLKVIDLRTNAIKQT, KCGS…KVLS, and QHSSSINAVAWSPSGLHVVSVDKGCKAVLWAQY.

This sequence belongs to the WD repeat ATG16 family. Homodimer. Homooligomer. Heterooligomer with ATG16L2. Interacts with WIPI1. Interacts with WIPI2. Interacts with RB1CC1; the interaction is required for ULK1 complex-dependent autophagy. Interacts with ATG5. Part of the minor complex composed of 4 sets of ATG12-ATG5 and ATG16L1 (400 kDa); this complex interacts with ATG3 leading to disruption of ATG7 interaction and promotion of ATG8-like proteins lipidation. Part of the major complex composed of 8 sets of ATG12-ATG5 and ATG16L1 (800 kDa). Interacts with RAB33B (GTP- and GDP-bound forms); the complex consists of a tetramer where two RAB33B molecules bind independently one molecule of the ATG16L1 homodimer; the interaction promotes ATG12-ATG5-ATG16L1 complex recruitment to phagophores. Interacts (via WD repeats) with TMEM59; the interaction mediates unconventional autophagic activity of TMEM59. Interacts with TLR2. Interacts (via WD repeats) with MEFV. Interacts with PPP1CA; the interaction dephosphorylates ATG16L1 causing dissociation of ATG12-ATG5-ATG16L1 complex. Interacts (via N-terminal) with CLTC. Interacts with NOD1. Interacts with NOD2. Interacts with TUFM. Interacts with TRIM16. Interacts (via WD repeats) with SPATA33. Interacts with IRGM. In terms of processing, proteolytic cleavage by activated CASP3 leads to degradation and may regulate autophagy upon cellular stress and apoptotic stimuli. Phosphorylation at Ser-139 promotes association with the ATG12-ATG5 conjugate to form the ATG12-ATG5-ATG16L1 complex.

The protein localises to the cytoplasm. It localises to the preautophagosomal structure membrane. It is found in the endosome membrane. Its subcellular location is the lysosome membrane. Plays an essential role in both canonical and non-canonical autophagy: interacts with ATG12-ATG5 to mediate the lipidation to ATG8 family proteins (MAP1LC3A, MAP1LC3B, MAP1LC3C, GABARAPL1, GABARAPL2 and GABARAP). Acts as a molecular hub, coordinating autophagy pathways via distinct domains that support either canonical or non-canonical signaling. During canonical autophagy, interacts with ATG12-ATG5 to mediate the conjugation of phosphatidylethanolamine (PE) to ATG8 proteins, to produce a membrane-bound activated form of ATG8. Thereby, controls the elongation of the nascent autophagosomal membrane. As part of the ATG8 conjugation system with ATG5 and ATG12, required for recruitment of LRRK2 to stressed lysosomes and induction of LRRK2 kinase activity in response to lysosomal stress. Also involved in non-canonical autophagy, a parallel pathway involving conjugation of ATG8 proteins to single membranes at endolysosomal compartments, probably by catalyzing conjugation of phosphatidylserine (PS) to ATG8. Non-canonical autophagy plays a key role in epithelial cells to limit lethal infection by influenza A (IAV) virus. Regulates mitochondrial antiviral signaling (MAVS)-dependent type I interferon (IFN-I) production. Negatively regulates NOD1- and NOD2-driven inflammatory cytokine response. Instead, promotes an autophagy-dependent antibacterial pathway together with NOD1 or NOD2. Plays a role in regulating morphology and function of Paneth cell. This chain is Autophagy-related protein 16-1, found in Pongo abelii (Sumatran orangutan).